The sequence spans 474 residues: Bifunctional protein HldE (474 aa).

The segment at 1–317 (MKLSMPRFDQ…RRAIQRSEGS (317 aa)) is ribokinase. 194-197 (NLSE) is a binding site for ATP. The active site involves Asp-263. Positions 343–474 (FTNGCFDILH…AIVEKIRNNE (132 aa)) are cytidylyltransferase.

This sequence in the N-terminal section; belongs to the carbohydrate kinase PfkB family. The protein in the C-terminal section; belongs to the cytidylyltransferase family. Homodimer.

It catalyses the reaction D-glycero-beta-D-manno-heptose 7-phosphate + ATP = D-glycero-beta-D-manno-heptose 1,7-bisphosphate + ADP + H(+). The enzyme catalyses D-glycero-beta-D-manno-heptose 1-phosphate + ATP + H(+) = ADP-D-glycero-beta-D-manno-heptose + diphosphate. It functions in the pathway nucleotide-sugar biosynthesis; ADP-L-glycero-beta-D-manno-heptose biosynthesis; ADP-L-glycero-beta-D-manno-heptose from D-glycero-beta-D-manno-heptose 7-phosphate: step 1/4. The protein operates within nucleotide-sugar biosynthesis; ADP-L-glycero-beta-D-manno-heptose biosynthesis; ADP-L-glycero-beta-D-manno-heptose from D-glycero-beta-D-manno-heptose 7-phosphate: step 3/4. In terms of biological role, catalyzes the phosphorylation of D-glycero-D-manno-heptose 7-phosphate at the C-1 position to selectively form D-glycero-beta-D-manno-heptose-1,7-bisphosphate. Functionally, catalyzes the ADP transfer from ATP to D-glycero-beta-D-manno-heptose 1-phosphate, yielding ADP-D-glycero-beta-D-manno-heptose. The sequence is that of Bifunctional protein HldE from Pseudomonas fluorescens (strain SBW25).